A 280-amino-acid chain; its full sequence is MDTRFNGGVIMDVTTKEQAIIAEEAGAVAVMALERIPADIRAAGGVSRMSDPKLIKEIMSAVKIPVMAKVRIGHFVEAEILQAIGIDFIDESEVLSPADSVHHVNKRDFSTPFVCGARNLGEALRRISEGAKMIRTKGEAGTGDVVQAVSHMRQIIKEINLVKALREDELYVMAKDLQVPYDLVKYVHDNGRLPVPNFSAGGVATPADAALMRRLGADGVFVGSGIFKSGDPKKRAKAIVEAVKNYNNPEIIAKVSEDLGEAMVGINENEIKIIMAERGV.

A D-ribose 5-phosphate-binding site is contributed by Asp12. The Schiff-base intermediate with D-ribose 5-phosphate role is filled by Lys69. Gly141 serves as a coordination point for D-ribose 5-phosphate. Arg153 is a D-glyceraldehyde 3-phosphate binding site. Residues Gly202 and 223 to 224 (GS) each bind D-ribose 5-phosphate.

It belongs to the PdxS/SNZ family. As to quaternary structure, in the presence of PdxT, forms a dodecamer of heterodimers.

It carries out the reaction aldehydo-D-ribose 5-phosphate + D-glyceraldehyde 3-phosphate + L-glutamine = pyridoxal 5'-phosphate + L-glutamate + phosphate + 3 H2O + H(+). Its pathway is cofactor biosynthesis; pyridoxal 5'-phosphate biosynthesis. Functionally, catalyzes the formation of pyridoxal 5'-phosphate from ribose 5-phosphate (RBP), glyceraldehyde 3-phosphate (G3P) and ammonia. The ammonia is provided by the PdxT subunit. Can also use ribulose 5-phosphate and dihydroxyacetone phosphate as substrates, resulting from enzyme-catalyzed isomerization of RBP and G3P, respectively. The polypeptide is Pyridoxal 5'-phosphate synthase subunit PdxS (Fusobacterium nucleatum subsp. nucleatum (strain ATCC 25586 / DSM 15643 / BCRC 10681 / CIP 101130 / JCM 8532 / KCTC 2640 / LMG 13131 / VPI 4355)).